A 509-amino-acid polypeptide reads, in one-letter code: Putative 6-phosphofructo-2-kinase/fructose-2,6-bisphosphatase YLR345W (509 aa).

A Phosphoserine modification is found at Ser-6. The tract at residues 6–291 is 6-phosphofructo-2-kinase; sequence SDDEELLNGL…FFLMNLRQKK (286 aa). 90–98 contacts ATP; it reads GLPATSKTL. Asp-173 serves as the catalytic Proton donor/acceptor. 212 to 217 serves as a coordination point for ATP; that stretch reads NIALAL. Arg-237 is a binding site for beta-D-fructose 6-phosphate. The fructose-2,6-bisphosphatase stretch occupies residues 292-466; the sequence is GCVYFARCGT…IAHESTLRVL (175 aa). Arg-298 contributes to the beta-D-fructose 2,6-bisphosphate binding site. An ATP-binding site is contributed by 415–418; the sequence is YKES. Tyr-433 and Arg-464 together coordinate beta-D-fructose 2,6-bisphosphate. 460-464 is a binding site for ATP; the sequence is ESTLR.

It in the C-terminal section; belongs to the phosphoglycerate mutase family. Homodimer.

The protein localises to the cytoplasm. It carries out the reaction beta-D-fructose 2,6-bisphosphate + H2O = beta-D-fructose 6-phosphate + phosphate. It catalyses the reaction beta-D-fructose 6-phosphate + ATP = beta-D-fructose 2,6-bisphosphate + ADP + H(+). Synthesis and degradation of fructose 2,6-bisphosphate. The protein is Putative 6-phosphofructo-2-kinase/fructose-2,6-bisphosphatase YLR345W of Saccharomyces cerevisiae (strain ATCC 204508 / S288c) (Baker's yeast).